The following is a 367-amino-acid chain: N-acetylmuramoyl-L-alanine amidase BlyA (367 aa).

The region spanning 24–158 (VKKCVLHYTA…DITHKNCPAP (135 aa)) is the N-acetylmuramoyl-L-alanine amidase domain. Residues 178-204 (SGKSVSKASPTKPTTSSPSSSSAVSGS) form a disordered region. A compositionally biased stretch (low complexity) spans 180-204 (KSVSKASPTKPTTSSPSSSSAVSGS). SH3b domains follow at residues 202–271 (SGSL…YVDV) and 298–367 (GKIK…GSTI).

This sequence belongs to the N-acetylmuramoyl-L-alanine amidase 2 family.

The protein localises to the secreted. The catalysed reaction is Hydrolyzes the link between N-acetylmuramoyl residues and L-amino acid residues in certain cell-wall glycopeptides.. Its function is as follows. Autolysins are involved in some important biological processes such as cell separation, cell-wall turnover, competence for genetic transformation, formation of the flagella and sporulation. Involved in prophage SP-beta-mediated cell lysis. The protein is N-acetylmuramoyl-L-alanine amidase BlyA (blyA) of Bacillus subtilis (strain 168).